Here is a 707-residue protein sequence, read N- to C-terminus: Ribosomal RNA large subunit methyltransferase K/L (707 aa).

In terms of domain architecture, THUMP spans 43 to 154 (QIYRCCLWSR…KDKAILGVDM (112 aa)).

The protein belongs to the methyltransferase superfamily. RlmKL family.

Its subcellular location is the cytoplasm. It catalyses the reaction guanosine(2445) in 23S rRNA + S-adenosyl-L-methionine = N(2)-methylguanosine(2445) in 23S rRNA + S-adenosyl-L-homocysteine + H(+). The enzyme catalyses guanosine(2069) in 23S rRNA + S-adenosyl-L-methionine = N(2)-methylguanosine(2069) in 23S rRNA + S-adenosyl-L-homocysteine + H(+). Functionally, specifically methylates the guanine in position 2445 (m2G2445) and the guanine in position 2069 (m7G2069) of 23S rRNA. The protein is Ribosomal RNA large subunit methyltransferase K/L of Vibrio campbellii (strain ATCC BAA-1116).